Reading from the N-terminus, the 355-residue chain is UDP-N-acetylglucosamine--N-acetylmuramyl-(pentapeptide) pyrophosphoryl-undecaprenol N-acetylglucosamine transferase (355 aa).

Residues 13–15 (TGG), Asn-125, Arg-162, Ser-190, Ile-244, and Gln-289 each bind UDP-N-acetyl-alpha-D-glucosamine.

Belongs to the glycosyltransferase 28 family. MurG subfamily.

The protein localises to the cell inner membrane. The catalysed reaction is di-trans,octa-cis-undecaprenyl diphospho-N-acetyl-alpha-D-muramoyl-L-alanyl-D-glutamyl-meso-2,6-diaminopimeloyl-D-alanyl-D-alanine + UDP-N-acetyl-alpha-D-glucosamine = di-trans,octa-cis-undecaprenyl diphospho-[N-acetyl-alpha-D-glucosaminyl-(1-&gt;4)]-N-acetyl-alpha-D-muramoyl-L-alanyl-D-glutamyl-meso-2,6-diaminopimeloyl-D-alanyl-D-alanine + UDP + H(+). It functions in the pathway cell wall biogenesis; peptidoglycan biosynthesis. Its function is as follows. Cell wall formation. Catalyzes the transfer of a GlcNAc subunit on undecaprenyl-pyrophosphoryl-MurNAc-pentapeptide (lipid intermediate I) to form undecaprenyl-pyrophosphoryl-MurNAc-(pentapeptide)GlcNAc (lipid intermediate II). The polypeptide is UDP-N-acetylglucosamine--N-acetylmuramyl-(pentapeptide) pyrophosphoryl-undecaprenol N-acetylglucosamine transferase (Neisseria meningitidis serogroup B (strain ATCC BAA-335 / MC58)).